The sequence spans 206 residues: Superoxide dismutase [Mn] (206 aa).

Positions 27, 82, 168, and 172 each coordinate Mn(2+).

It belongs to the iron/manganese superoxide dismutase family. As to quaternary structure, homodimer. The cofactor is Mn(2+).

The catalysed reaction is 2 superoxide + 2 H(+) = H2O2 + O2. Destroys superoxide anion radicals which are normally produced within the cells and which are toxic to biological systems. The chain is Superoxide dismutase [Mn] (sodA) from Salmonella typhimurium (strain LT2 / SGSC1412 / ATCC 700720).